A 775-amino-acid chain; its full sequence is Subtilisin-like protease SBT1.5 (775 aa).

The signal sequence occupies residues methionine 1–serine 19. A propeptide spans alanine 20 to histidine 103 (activation peptide). Residues threonine 27 to histidine 103 form the Inhibitor I9 domain. The 511-residue stretch at serine 107 to methionine 617 folds into the Peptidase S8 domain. Aspartate 137 functions as the Charge relay system in the catalytic mechanism. Asparagine 196 carries an N-linked (GlcNAc...) asparagine glycan. Catalysis depends on histidine 210, which acts as the Charge relay system. The 93-residue stretch at methionine 367 to arginine 459 folds into the PA domain. Serine 549 acts as the Charge relay system in catalysis. Residues asparagine 599, asparagine 638, and asparagine 762 are each glycosylated (N-linked (GlcNAc...) asparagine).

Belongs to the peptidase S8 family.

It is found in the secreted. The sequence is that of Subtilisin-like protease SBT1.5 from Arabidopsis thaliana (Mouse-ear cress).